Consider the following 393-residue polypeptide: DNA primase large subunit PriL (393 aa).

[4Fe-4S] cluster is bound by residues Cys-230, Cys-339, Cys-350, and Cys-356.

Belongs to the eukaryotic-type primase large subunit family. In terms of assembly, heterodimer of a small subunit (PriS) and a large subunit (PriL). [4Fe-4S] cluster is required as a cofactor.

Its function is as follows. Regulatory subunit of DNA primase, an RNA polymerase that catalyzes the synthesis of short RNA molecules used as primers for DNA polymerase during DNA replication. Stabilizes and modulates the activity of the small subunit, increasing the rate of DNA synthesis, and conferring RNA synthesis capability. The DNA polymerase activity may enable DNA primase to also catalyze primer extension after primer synthesis. May also play a role in DNA repair. Displays gap-filling and strand-displacement activities. This is DNA primase large subunit PriL from Pyrococcus abyssi (strain GE5 / Orsay).